The sequence spans 1153 residues: Probable RNA-dependent RNA polymerase 3 (1153 aa).

The protein belongs to the RdRP family. Expressed in shoot apical meristem (SAM) and panicles.

It carries out the reaction RNA(n) + a ribonucleoside 5'-triphosphate = RNA(n+1) + diphosphate. Its function is as follows. Probably involved in the RNA silencing pathway and required for the generation of small interfering RNAs (siRNAs). This is Probable RNA-dependent RNA polymerase 3 (RDR3) from Oryza sativa subsp. japonica (Rice).